The following is a 657-amino-acid chain: MTVAHSHRFSTAVNPINISLLSKQLLQLGRTSNNSGTFSEISNQKELLVSSLISKLDDCINLNQIKQIHGHVLRKGLDQSCYILTKLIRTLTKLGVPMDPYARRVIEPVQFRNPFLWTAVIRGYAIEGKFDEAIAMYGCMRKEEITPVSFTFSALLKACGTMKDLNLGRQFHAQTFRLRGFCFVYVGNTMIDMYVKCESIDCARKVFDEMPERDVISWTELIAAYARVGNMECAAELFESLPTKDMVAWTAMVTGFAQNAKPQEALEYFDRMEKSGIRADEVTVAGYISACAQLGASKYADRAVQIAQKSGYSPSDHVVIGSALIDMYSKCGNVEEAVNVFMSMNNKNVFTYSSMILGLATHGRAQEALHLFHYMVTQTEIKPNTVTFVGALMACSHSGLVDQGRQVFDSMYQTFGVQPTRDHYTCMVDLLGRTGRLQEALELIKTMSVEPHGGVWGALLGACRIHNNPEIAEIAAEHLFELEPDIIGNYILLSNVYASAGDWGGVLRVRKLIKEKGLKKTPAVSWVVDKNGQMHKFFPGNLNHPMSNKIQDKLEELVERLTVLGYQPDLSSVPYDVSDNAKRLILIQHTEKLALAFSLLTTNRDSTITIMKNLRMCLDCHKFMRLASEVTGKVIIMRDNMRFHHFRSGDCSCGDFW.

PPR repeat units lie at residues 45–79, 80–112, 113–147, 148–178, 183–213, 214–244, 245–279, 280–314, 317–347, 348–383, 384–419, and 420–450; these read KELLVSSLISKLDDCINLNQIKQIHGHVLRKGLDQ, SCYILTKLIRTLTKLGVPMDPYARRVIEPVQFR, NPFLWTAVIRGYAIEGKFDEAIAMYGCMRKEEITP, VSFTFSALLKACGTMKDLNLGRQFHAQTFRL, FVYVGNTMIDMYVKCESIDCARKVFDEMPER, DVISWTELIAAYARVGNMECAAELFESLPTK, DMVAWTAMVTGFAQNAKPQEALEYFDRMEKSGIRA, DEVTVAGYISACAQLGASKYADRAVQIAQKSGYSP, HVVIGSALIDMYSKCGNVEEAVNVFMSMNNK, NVFTYSSMILGLATHGRAQEALHLFHYMVTQTEIKP, NTVTFVGALMACSHSGLVDQGRQVFDSMYQTFGVQP, and TRDHYTCMVDLLGRTGRLQEALELIKTMSVE. The interval 455–530 is type E motif; sequence VWGALLGACR…TPAVSWVVDK (76 aa). A type E(+) motif region spans residues 532-562; that stretch reads GQMHKFFPGNLNHPMSNKIQDKLEELVERLT. The interval 563-657 is type DYW motif; it reads VLGYQPDLSS…SGDCSCGDFW (95 aa).

It belongs to the PPR family. PCMP-H subfamily.

This Arabidopsis thaliana (Mouse-ear cress) protein is Pentatricopeptide repeat-containing protein At5g44230 (PCMP-H17).